The chain runs to 1507 residues: Nonribosomal peptide synthetase ataP (1507 aa).

The 72-residue stretch at 1 to 72 (MQINIRNEIA…DIISRSTGMY (72 aa)) folds into the Carrier 1 domain. An O-(pantetheine 4'-phosphoryl)serine modification is found at Ser33. The segment at 98–119 (TPSPSPSGPSTGCPTPDTLDTT) is disordered. Residues 105-115 (GPSTGCPTPDT) are compositionally biased toward low complexity. The segment at 163–429 (TRMAWQQVLE…NRVFRQLVQL (267 aa)) is condensation 1. Residues 514–893 (AAAENPEACA…GRNDRQIKLR (380 aa)) form an adenylation region. The 78-residue stretch at 988 to 1065 (NEMSPTEQRV…DLSQRIDKLQ (78 aa)) folds into the Carrier 2 domain. Residue Ser1025 is modified to O-(pantetheine 4'-phosphoryl)serine. Residues 1099 to 1471 (TSNTSFTVSF…MTALRLLIKN (373 aa)) are condensation 2.

Belongs to the NRP synthetase family.

Its pathway is mycotoxin biosynthesis. In terms of biological role, nonribosomal peptide synthetase; part of the gene cluster that mediates the biosynthesis of acetylaranotin, a member of the epipolythiodioxopiperazine (ETP) class of toxins characterized by a disulfide-bridged cyclic dipeptide. The first step of acetylaranotin biosynthesis is performed by the NRPS ataP which produces diketopiperazine cyclo-L-Phe-L-Phe via the condensation of 2 phenylalanines (L-Phe). The ataC domain of ataTC then catalyzes the formation of bishydroxylation of cyclo-L-Phe-L-Phe. The glutathione S-transferase domain ataG in ataIMG further catalyzes the conjugation of two glutathiones to the bishydroxylated intermediate. Next, the dipeptidase ataJ removes the Glu residues. The following step is performed by the carbon sulfur lyase domain ataI of ataIMG which may convert the bis-cysteinyl adduct to yield an epidithiol intermediate. The ataT domain from ataTC then catalyzes the oxidation of the free dithiols, followed by a cyclization step catalyzed by the cytochrome P450 ataF. AtaF probably acts as an epoxidase to promote a dual epoxidation formation at C8 and C9 along with C8' and C9', followed by the spontaneous nucleophilic attack of the amide nitrogens N10 and N10' to yield an intermediate with the pyrrolidine partial structure. The final steps of acetylaranotin biosynthesis involve the acetylation and ring rearrangement of an epitetrathiodiketopiperazine intermediate to produce acetylaranotin. AtaH probably catalyzes the acetylation of epitetrathiodiketopiperazine to produce a diacetate and ataY is responsible for the formation of the dihydrooxepin moiety that converts the diacetate intermediate to acetylaranotin via acetylapoaranotin. Both enzymes could function independently in the absence of the other. The acetylaranotin bis-thiomethyltransferase ataS located outside of acetylaranotin gene cluster is the main thiomethyltransferase responsible for converting acetylaranotin and its related intermediates to their methylated forms. This chain is Nonribosomal peptide synthetase ataP, found in Aspergillus terreus (strain NIH 2624 / FGSC A1156).